The chain runs to 256 residues: Protein RGF1 INDUCIBLE TRANSCRIPTION FACTOR 1 (256 aa).

The B box-type zinc-finger motif lies at 21-59 (CPYHETAKKNERNVCCLDCCTSLCPHCVPSHRFHRLLQV).

As to expression, expressed predominantly in root meristematic zones.

The protein localises to the nucleus. In terms of biological role, probable transcription factor that plays a central role in mediating RGF1 hormone peptide signaling leading to the production of reactive oxygen species (ROS) in roots to modulate meristem size and root growth, probably via oxidative post-translational modification of the transcription factor PLETHORA (e.g. PLT1 and PLT2). This chain is Protein RGF1 INDUCIBLE TRANSCRIPTION FACTOR 1, found in Arabidopsis thaliana (Mouse-ear cress).